Consider the following 255-residue polypeptide: Indole-3-glycerol phosphate synthase (255 aa).

The protein belongs to the TrpC family.

It catalyses the reaction 1-(2-carboxyphenylamino)-1-deoxy-D-ribulose 5-phosphate + H(+) = (1S,2R)-1-C-(indol-3-yl)glycerol 3-phosphate + CO2 + H2O. It functions in the pathway amino-acid biosynthesis; L-tryptophan biosynthesis; L-tryptophan from chorismate: step 4/5. This is Indole-3-glycerol phosphate synthase from Streptococcus pneumoniae (strain Taiwan19F-14).